The primary structure comprises 314 residues: Electron transfer flavoprotein subunit alpha (314 aa).

253-281 is a binding site for FAD; sequence LYVAVGISGAIQHLAGMKDSKVIVAINKD.

The protein belongs to the ETF alpha-subunit/FixB family. Heterodimer of an alpha and a beta subunit. Requires FAD as cofactor.

In terms of biological role, the electron transfer flavoprotein serves as a specific electron acceptor for other dehydrogenases. It transfers the electrons to the main respiratory chain via ETF-ubiquinone oxidoreductase (ETF dehydrogenase). This chain is Electron transfer flavoprotein subunit alpha (etfA), found in Bradyrhizobium diazoefficiens (strain JCM 10833 / BCRC 13528 / IAM 13628 / NBRC 14792 / USDA 110).